The following is an 86-amino-acid chain: Large ribosomal subunit protein bL27 (86 aa).

This sequence belongs to the bacterial ribosomal protein bL27 family.

The polypeptide is Large ribosomal subunit protein bL27 (Xanthomonas campestris pv. campestris (strain 8004)).